The chain runs to 346 residues: Tetraacyldisaccharide 4'-kinase (346 aa).

Residue 54 to 61 coordinates ATP; the sequence is TVGGAGKT.

The protein belongs to the LpxK family.

It carries out the reaction a lipid A disaccharide + ATP = a lipid IVA + ADP + H(+). The protein operates within glycolipid biosynthesis; lipid IV(A) biosynthesis; lipid IV(A) from (3R)-3-hydroxytetradecanoyl-[acyl-carrier-protein] and UDP-N-acetyl-alpha-D-glucosamine: step 6/6. In terms of biological role, transfers the gamma-phosphate of ATP to the 4'-position of a tetraacyldisaccharide 1-phosphate intermediate (termed DS-1-P) to form tetraacyldisaccharide 1,4'-bis-phosphate (lipid IVA). The chain is Tetraacyldisaccharide 4'-kinase from Sinorhizobium fredii (strain NBRC 101917 / NGR234).